The sequence spans 501 residues: Histidine--tRNA ligase (501 aa).

It belongs to the class-II aminoacyl-tRNA synthetase family. In terms of assembly, homodimer.

Its subcellular location is the cytoplasm. It carries out the reaction tRNA(His) + L-histidine + ATP = L-histidyl-tRNA(His) + AMP + diphosphate + H(+). The sequence is that of Histidine--tRNA ligase from Methylocella silvestris (strain DSM 15510 / CIP 108128 / LMG 27833 / NCIMB 13906 / BL2).